A 258-amino-acid chain; its full sequence is GTP cyclohydrolase FolE2 (258 aa).

The protein belongs to the GTP cyclohydrolase IV family.

It catalyses the reaction GTP + H2O = 7,8-dihydroneopterin 3'-triphosphate + formate + H(+). Its pathway is cofactor biosynthesis; 7,8-dihydroneopterin triphosphate biosynthesis; 7,8-dihydroneopterin triphosphate from GTP: step 1/1. Functionally, converts GTP to 7,8-dihydroneopterin triphosphate. The chain is GTP cyclohydrolase FolE2 from Pseudothermotoga lettingae (strain ATCC BAA-301 / DSM 14385 / NBRC 107922 / TMO) (Thermotoga lettingae).